Reading from the N-terminus, the 1141-residue chain is DNA-directed RNA polymerase subunit beta (1141 aa).

It belongs to the RNA polymerase beta chain family. The RNAP catalytic core consists of 2 alpha, 1 beta, 1 beta' and 1 omega subunit. When a sigma factor is associated with the core the holoenzyme is formed, which can initiate transcription.

It carries out the reaction RNA(n) + a ribonucleoside 5'-triphosphate = RNA(n+1) + diphosphate. DNA-dependent RNA polymerase catalyzes the transcription of DNA into RNA using the four ribonucleoside triphosphates as substrates. The chain is DNA-directed RNA polymerase subunit beta from Frankia casuarinae (strain DSM 45818 / CECT 9043 / HFP020203 / CcI3).